The primary structure comprises 313 residues: Myeloma-overexpressed gene protein (313 aa).

A disordered region spans residues 107–129 (ERNKGDKGAQTGAGLSQEAEDVD).

This chain is Myeloma-overexpressed gene protein (MYEOV), found in Homo sapiens (Human).